The following is a 258-amino-acid chain: UPF0246 protein YaaA (258 aa).

Belongs to the UPF0246 family.

The chain is UPF0246 protein YaaA from Escherichia coli (strain K12 / MC4100 / BW2952).